The primary structure comprises 196 residues: Inosine triphosphate pyrophosphatase 2 (196 aa).

Position 20 to 25 (20 to 25 (TGNDGK)) interacts with ITP. Mg(2+) is bound at residue glutamate 48. Residues lysine 61, 77-78 (DT), lysine 94, 153-156 (FGWD), lysine 177, and 182-183 (PR) each bind ITP.

This sequence belongs to the HAM1 NTPase family. As to quaternary structure, homodimer. Mg(2+) is required as a cofactor. Requires Mn(2+) as cofactor.

The protein localises to the cytoplasm. The enzyme catalyses ITP + H2O = IMP + diphosphate + H(+). It catalyses the reaction dITP + H2O = dIMP + diphosphate + H(+). The catalysed reaction is XTP + H2O = XMP + diphosphate + H(+). Functionally, pyrophosphatase that hydrolyzes non-canonical purine nucleotides such as inosine triphosphate (ITP), deoxyinosine triphosphate (dITP) or xanthosine 5'-triphosphate (XTP) to their respective monophosphate derivatives. The enzyme does not distinguish between the deoxy- and ribose forms. Probably excludes non-canonical purines from RNA and DNA precursor pools, thus preventing their incorporation into RNA and DNA and avoiding chromosomal lesions. In Trypanosoma cruzi (strain CL Brener), this protein is Inosine triphosphate pyrophosphatase 2.